The primary structure comprises 284 residues: Aspartate dehydrogenase domain-containing protein (284 aa).

The protein belongs to the L-aspartate dehydrogenase family.

The polypeptide is Aspartate dehydrogenase domain-containing protein (aspdh) (Xenopus tropicalis (Western clawed frog)).